The following is a 193-amino-acid chain: MPKGRRGSHSPTMSQRSAPPLYFPSLYDRGISSSPLSDFNIWKKLFVPLKAGGAPVGGAAGARSLSQALPAPAPPPPPPPGLGPSSERPWPSPWPSGLASIPYEPLRFFYSPPPGPEVVASPLVPCPSTPRLASASHPEELCELEIRIKELELLTITGDGFDSQSYTFLKALKDEKLQGLKTKQPGKKSASLS.

A disordered region spans residues 55–94 (PVGGAAGARSLSQALPAPAPPPPPPPGLGPSSERPWPSPW). A compositionally biased stretch (pro residues) spans 71-82 (APAPPPPPPPGL).

This is an uncharacterized protein from Homo sapiens (Human).